A 322-amino-acid chain; its full sequence is Nucleoprotein (322 aa).

RNA contacts are provided by Tyr-43, Tyr-46, Val-76, Arg-122, Lys-240, and Ser-269.

The protein belongs to the tenuiviruses nucleocapsid protein family.

The protein resides in the virion. Its subcellular location is the host cytoplasm. Encapsidates the genome, protecting it from nucleases. The encapsidated genomic RNA is termed the nucleocapsid (NC), and serves as template for viral transcription and replication. This is Nucleoprotein from Avena sativa (Oat).